The primary structure comprises 309 residues: Ecotin-like protein 3 (309 aa).

The interval 140 to 309 (QQELEAPAVS…KSGRDSRRNS (170 aa)) is disordered. Residues 156-167 (VRERQNNPEGHA) show a composition bias toward basic and acidic residues. Residues 168–180 (HPVVVHSVESPEV) show a composition bias toward low complexity. The segment covering 181–190 (SGHKDGDQPM) has biased composition (basic and acidic residues). The span at 196–205 (LKQSCSNSSR) shows a compositional bias: low complexity. Residues 209-221 (HSASGSSPKNTPL) are compositionally biased toward polar residues. A compositionally biased stretch (basic and acidic residues) spans 261 to 279 (SDSTSSRKDDQDSGYEKKV). The segment covering 290–299 (SSPKRSASPK) has biased composition (low complexity).

The protein belongs to the protease inhibitor I11 (ecotin) family.

The polypeptide is Ecotin-like protein 3 (Leishmania braziliensis).